The chain runs to 269 residues: Thymidylate synthase (269 aa).

Residue Arg26 participates in dUMP binding. His56 serves as a coordination point for (6R)-5,10-methylene-5,6,7,8-tetrahydrofolate. A dUMP-binding site is contributed by 131–132 (RR). The active-site Nucleophile is Cys151. DUMP-binding positions include 171–174 (RSAD), Asn182, and 212–214 (HIY). Asp174 is a binding site for (6R)-5,10-methylene-5,6,7,8-tetrahydrofolate. Ala268 lines the (6R)-5,10-methylene-5,6,7,8-tetrahydrofolate pocket.

Belongs to the thymidylate synthase family. Bacterial-type ThyA subfamily. In terms of assembly, homodimer.

Its subcellular location is the cytoplasm. The enzyme catalyses dUMP + (6R)-5,10-methylene-5,6,7,8-tetrahydrofolate = 7,8-dihydrofolate + dTMP. The protein operates within pyrimidine metabolism; dTTP biosynthesis. Functionally, catalyzes the reductive methylation of 2'-deoxyuridine-5'-monophosphate (dUMP) to 2'-deoxythymidine-5'-monophosphate (dTMP) while utilizing 5,10-methylenetetrahydrofolate (mTHF) as the methyl donor and reductant in the reaction, yielding dihydrofolate (DHF) as a by-product. This enzymatic reaction provides an intracellular de novo source of dTMP, an essential precursor for DNA biosynthesis. The protein is Thymidylate synthase of Leifsonia xyli subsp. xyli (strain CTCB07).